A 638-amino-acid polypeptide reads, in one-letter code: Threonine--tRNA ligase (638 aa).

The TGS domain maps to 1–61 (MPVITLPDGS…EHDARIEIVT (61 aa)). The tract at residues 243–534 (DHRKIAKAQD…LIEEYAGHFP (292 aa)) is catalytic. 3 residues coordinate Zn(2+): C334, H385, and H511.

Belongs to the class-II aminoacyl-tRNA synthetase family. In terms of assembly, homodimer. The cofactor is Zn(2+).

Its subcellular location is the cytoplasm. The enzyme catalyses tRNA(Thr) + L-threonine + ATP = L-threonyl-tRNA(Thr) + AMP + diphosphate + H(+). Catalyzes the attachment of threonine to tRNA(Thr) in a two-step reaction: L-threonine is first activated by ATP to form Thr-AMP and then transferred to the acceptor end of tRNA(Thr). Also edits incorrectly charged L-seryl-tRNA(Thr). This Idiomarina loihiensis (strain ATCC BAA-735 / DSM 15497 / L2-TR) protein is Threonine--tRNA ligase.